The following is a 367-amino-acid chain: Endophilin-A2 (367 aa).

The membrane-binding amphipathic helix stretch occupies residues 1-21; the sequence is MSVAGLKKQFYKASQLVSEKV. The region spanning 18–249 is the BAR domain; that stretch reads SEKVGGAEGT…LKRRMREASS (232 aa). The interval 60–87 is required for dimerization upon membrane association; it reads PNPASRAKLTMLNTMSKIRGQVKNPGYP. Residues 181 to 250 are a coiled coil; that stretch reads EELRQAMEKF…KRRMREASSR (70 aa). An interaction with ARC region spans residues 218-254; the sequence is LVDAQLDYHRQAVQILDELAEKLKRRMREASSRPRRE. Residues 243–293 form a disordered region; the sequence is RMREASSRPRREYKPKPRETYDFGESDQSNGGFSCTPTPKVSASSSFRSDK. A compositionally biased stretch (basic and acidic residues) spans 245-263; sequence REASSRPRREYKPKPRETY. A compositionally biased stretch (polar residues) spans 268–289; that stretch reads SDQSNGGFSCTPTPKVSASSSF. Positions 305–364 constitute an SH3 domain; it reads LDQPCCKALYDFEPENDGELGFKEGDIITLTNQIDENWYEGMINGQSGFFPLNYVEVLVP.

Belongs to the endophilin family. Interacts with ARC. Interacts with SYNJ1 and DNM1. Highest level in central region of the theca of developing follicles (at protein level). Expressed at highest level in brain and testis, at high level in kidney, lung and stroma, low level in spleen and adrenal gland (at protein level). Expressed in most tissue with highest levels in small ovarian follicles, brain and testis.

The protein localises to the cytoplasm. Its subcellular location is the early endosome membrane. It localises to the cell projection. It is found in the podosome. Its function is as follows. Implicated in endocytosis. May recruit other proteins to membranes with high curvature. This Gallus gallus (Chicken) protein is Endophilin-A2.